The chain runs to 95 residues: Aspartyl/glutamyl-tRNA(Asn/Gln) amidotransferase subunit C (95 aa).

It belongs to the GatC family. In terms of assembly, heterotrimer of A, B and C subunits.

It carries out the reaction L-glutamyl-tRNA(Gln) + L-glutamine + ATP + H2O = L-glutaminyl-tRNA(Gln) + L-glutamate + ADP + phosphate + H(+). It catalyses the reaction L-aspartyl-tRNA(Asn) + L-glutamine + ATP + H2O = L-asparaginyl-tRNA(Asn) + L-glutamate + ADP + phosphate + 2 H(+). Functionally, allows the formation of correctly charged Asn-tRNA(Asn) or Gln-tRNA(Gln) through the transamidation of misacylated Asp-tRNA(Asn) or Glu-tRNA(Gln) in organisms which lack either or both of asparaginyl-tRNA or glutaminyl-tRNA synthetases. The reaction takes place in the presence of glutamine and ATP through an activated phospho-Asp-tRNA(Asn) or phospho-Glu-tRNA(Gln). The sequence is that of Aspartyl/glutamyl-tRNA(Asn/Gln) amidotransferase subunit C from Alkalilimnicola ehrlichii (strain ATCC BAA-1101 / DSM 17681 / MLHE-1).